A 156-amino-acid chain; its full sequence is Small ribosomal subunit protein uS7 (156 aa).

The protein belongs to the universal ribosomal protein uS7 family. In terms of assembly, part of the 30S ribosomal subunit. Contacts proteins S9 and S11.

Its function is as follows. One of the primary rRNA binding proteins, it binds directly to 16S rRNA where it nucleates assembly of the head domain of the 30S subunit. Is located at the subunit interface close to the decoding center, probably blocks exit of the E-site tRNA. The sequence is that of Small ribosomal subunit protein uS7 from Rhizobium rhizogenes (strain K84 / ATCC BAA-868) (Agrobacterium radiobacter).